Reading from the N-terminus, the 386-residue chain is Cobalt-precorrin-5B C(1)-methyltransferase (386 aa).

This sequence belongs to the CbiD family.

The catalysed reaction is Co-precorrin-5B + S-adenosyl-L-methionine = Co-precorrin-6A + S-adenosyl-L-homocysteine. It functions in the pathway cofactor biosynthesis; adenosylcobalamin biosynthesis; cob(II)yrinate a,c-diamide from sirohydrochlorin (anaerobic route): step 6/10. In terms of biological role, catalyzes the methylation of C-1 in cobalt-precorrin-5B to form cobalt-precorrin-6A. The sequence is that of Cobalt-precorrin-5B C(1)-methyltransferase from Prochlorococcus marinus (strain MIT 9303).